Here is a 340-residue protein sequence, read N- to C-terminus: Guanine nucleotide-binding protein G(I)/G(S)/G(T) subunit beta-1 (340 aa).

WD repeat units follow at residues Gly-53–Asp-83, Leu-95–Asn-125, Gly-141–Asp-170, Gly-182–Asp-212, Gly-224–Asp-254, Asn-268–Asp-298, and Gly-310–Asn-340.

Belongs to the WD repeat G protein beta family. G proteins are composed of 3 units, alpha, beta and gamma.

Guanine nucleotide-binding proteins (G proteins) are involved as a modulator or transducer in various transmembrane signaling systems. The beta and gamma chains are required for the GTPase activity, for replacement of GDP by GTP, and for G protein-effector interaction. The chain is Guanine nucleotide-binding protein G(I)/G(S)/G(T) subunit beta-1 (gnb1) from Danio rerio (Zebrafish).